Consider the following 239-residue polypeptide: RING finger protein 151 (239 aa).

The RING-type zinc finger occupies Cys20–Arg58. A TRAF-type zinc finger spans residues Glu101–Glu156.

In terms of assembly, interacts with DTNBP1. Expressed in testis. Expressed in round spermatids of the stages VII-VIII semniniferous tubules. Expressed in elongating spermatids of stages VIII-IX seminiferous tubules (at protein level).

The protein resides in the cytoplasm. The protein localises to the nucleus. Functionally, may be involved in acrosome formation of spermatids. The chain is RING finger protein 151 (Rnf151) from Mus musculus (Mouse).